The chain runs to 245 residues: Tetraspanin-6 (245 aa).

The Cytoplasmic portion of the chain corresponds to 1-19; sequence MASPSRRLQTKPVITCFKS. A helical transmembrane segment spans residues 20-40; that stretch reads VLLIYTFIFWITGVILLAVGI. At 41–59 the chain is on the extracellular side; it reads WGKVSLENYFSLLNEKATN. A helical transmembrane segment spans residues 60–80; sequence VPFVLIATGTVIILLGTFGCF. The Cytoplasmic segment spans residues 81–93; it reads ATCRASAWMLKLY. The helical transmembrane segment at 94–114 threads the bilayer; it reads AMFLTLIFLVELVAAIVGFVF. The Extracellular portion of the chain corresponds to 115 to 208; sequence RHEIKNSFKN…IKVMTIIESE (94 aa). N134 carries N-linked (GlcNAc...) asparagine glycosylation. The chain crosses the membrane as a helical span at residues 209–229; sequence MGVVAGISFGVACFQLIGIFL. Residues 230-245 are Cytoplasmic-facing; sequence AYCLSRAITNNQYEIV.

This sequence belongs to the tetraspanin (TM4SF) family.

Its subcellular location is the membrane. This chain is Tetraspanin-6 (TSPAN6), found in Pongo abelii (Sumatran orangutan).